We begin with the raw amino-acid sequence, 399 residues long: uncharacterized protein (399 aa).

Positions 375-399 (AAGGHRGSHGKSEQAATVRVVDDRR) are disordered.

Belongs to the mycobacterial PPE family.

This is an uncharacterized protein from Mycobacterium tuberculosis (strain CDC 1551 / Oshkosh).